The following is a 172-amino-acid chain: Adenine phosphoribosyltransferase (172 aa).

Belongs to the purine/pyrimidine phosphoribosyltransferase family. In terms of assembly, homodimer.

It localises to the cytoplasm. The enzyme catalyses AMP + diphosphate = 5-phospho-alpha-D-ribose 1-diphosphate + adenine. The protein operates within purine metabolism; AMP biosynthesis via salvage pathway; AMP from adenine: step 1/1. Functionally, catalyzes a salvage reaction resulting in the formation of AMP, that is energically less costly than de novo synthesis. In Clostridium beijerinckii (strain ATCC 51743 / NCIMB 8052) (Clostridium acetobutylicum), this protein is Adenine phosphoribosyltransferase.